We begin with the raw amino-acid sequence, 1059 residues long: Endo-1,4-beta-xylanase A (1059 aa).

The N-terminal stretch at 1–30 (MQVRKRRGLLDVSTAVLVGILAGFLGVVLA) is a signal peptide. The A-1 stretch occupies residues 47 to 199 (SSLETVLALS…LDKVQVLAPK (153 aa)). Positions 200 to 354 (ESGPKVIYET…DDVKIVDTTS (155 aa)) are A-2. Residues 364–692 (EKEIPALKEV…KLAYWAIVAP (329 aa)) enclose the GH10 domain. The active-site Proton donor is Glu502. Glu608 acts as the Nucleophile in catalysis. CBM-cenC domains lie at 700 to 870 (KESR…LEGI) and 871 to 1059 (MVAT…RLIK).

It belongs to the glycosyl hydrolase 10 (cellulase F) family.

The enzyme catalyses Endohydrolysis of (1-&gt;4)-beta-D-xylosidic linkages in xylans.. The protein is Endo-1,4-beta-xylanase A (xynA) of Thermotoga maritima (strain ATCC 43589 / DSM 3109 / JCM 10099 / NBRC 100826 / MSB8).